We begin with the raw amino-acid sequence, 346 residues long: Protein Spea_1705 (346 aa).

C101 serves as the catalytic Proton acceptor. Substrate is bound by residues 102 to 103 (GH), D262, and 267 to 268 (GT).

This sequence belongs to the proline racemase family.

It catalyses the reaction trans-3-hydroxy-L-proline = 1-pyrroline-2-carboxylate + H2O. Functionally, in vitro, catalyzes the dehydration of trans-3-hydroxy-L-proline (t3LHyp) to Delta(1)-pyrroline-2-carboxylate (Pyr2C), albeit with very low efficiency. The physiological substrate may be different. Displays neither trans-4-hydroxy-L-proline (t4LHyp) epimerase nor proline racemase activity. This chain is Protein Spea_1705, found in Shewanella pealeana (strain ATCC 700345 / ANG-SQ1).